The primary structure comprises 204 residues: CASP-like protein 3A1 (204 aa).

Over 1-39 (MGSIGNGRNGSEVGIQIPAMGNKEVLERPAIPRWPRLGV) the chain is Cytoplasmic. The chain crosses the membrane as a helical span at residues 40 to 60 (VMVATRAVALVMAVLSMALMI). At 61 to 88 (SAKQRGSLKIFGIEIPLYANWSFSDSLE) the chain is on the extracellular side. The N-linked (GlcNAc...) asparagine glycan is linked to Asn80. Residues 89–109 (YLVGMSAVSAAYCLAQLLLTA) traverse the membrane as a helical segment. At 110 to 124 (HKAVKNAPVVQSRNY) the chain is on the cytoplasmic side. The helical transmembrane segment at 125–145 (AWLLFTGDQIFAYAMMSAGSA) threads the bilayer. Residues 146-179 (AAAVANLNRTGIRHTALPNFCKPLPRFCDLSAAS) lie on the Extracellular side of the membrane. The N-linked (GlcNAc...) asparagine glycan is linked to Asn153. A helical transmembrane segment spans residues 180-200 (IACAFLSCIFLAASAVIDVIW). Over 201–204 (LSNM) the chain is Cytoplasmic.

Belongs to the Casparian strip membrane proteins (CASP) family. In terms of assembly, homodimer and heterodimers.

The protein localises to the cell membrane. This chain is CASP-like protein 3A1, found in Oryza sativa subsp. indica (Rice).